We begin with the raw amino-acid sequence, 628 residues long: Venom redulysin 1 (628 aa).

Positions 1–19 (MSKLWLLLLLVAAFQAVHS) are cleaved as a signal peptide. A propeptide spanning residues 20 to 368 (YPAAESDYLE…EDDVAESDEE (349 aa)) is cleaved from the precursor. Positions 290–313 (DYEEEEEEEEEEEFELEEDYEEDP) are disordered. The span at 291-313 (YEEEEEEEEEEEFELEEDYEEDP) shows a compositional bias: acidic residues.

Belongs to the redulysin-like family. In terms of processing, contains 5 disulfide bonds. As to expression, expressed by the venom gland (posterior main gland) (at protein level).

The protein localises to the secreted. Its function is as follows. Highly abundant protein that may be responsible for the observed disruption of sensory neuron membranes, since it is homologous to proteins such as trialysin, which forms pores in lipid bilayers. Probable insecticidal toxin. The chain is Venom redulysin 1 from Platymeris rhadamanthus (Red spot assassin bug).